The sequence spans 70 residues: Gas vesicle protein A (70 aa).

Belongs to the gas vesicle GvpA family. The gas vesicle shell is 2 nm thick and consists of a single layer of this protein. It forms helical ribs nearly perpendicular to the long axis of the vesicle.

The protein localises to the gas vesicle shell. Functionally, gas vesicles are hollow, gas filled proteinaceous nanostructures found in some microorganisms. During planktonic growth they allow positioning of the organism at a favorable depth for light or nutrient acquisition. GvpA forms the protein shell. This chain is Gas vesicle protein A, found in Bradyrhizobium sp. (strain ORS 278).